We begin with the raw amino-acid sequence, 199 residues long: Hematopoietic prostaglandin D synthase (199 aa).

One can recognise a GST N-terminal domain in the interval 2–79 (PNYKLLYFNM…YLTKNTDLAG (78 aa)). Residues Tyr8, Arg14, Trp39, 49–51 (GKI), and 63–64 (QS) contribute to the glutathione site. The GST C-terminal domain occupies 81–199 (TALEQCQADA…WILKRPQTKL (119 aa)).

The protein belongs to the GST superfamily. Sigma family. Homodimer. Glutathione is required as a cofactor. Expressed in skin and oviduct.

The protein localises to the cytoplasm. It carries out the reaction prostaglandin H2 = prostaglandin D2. It catalyses the reaction RX + glutathione = an S-substituted glutathione + a halide anion + H(+). The catalysed reaction is 2-glyceryl-prostaglandin H2 = 2-glyceryl-prostaglandin D2. Its function is as follows. Bifunctional enzyme which catalyzes both the conversion of PGH2 to PGD2, a prostaglandin involved in smooth muscle contraction/relaxation and a potent inhibitor of platelet aggregation, and the conjugation of glutathione with a wide range of aryl halides and organic isothiocyanates. Also exhibits low glutathione-peroxidase activity. This chain is Hematopoietic prostaglandin D synthase, found in Mus musculus (Mouse).